A 1454-amino-acid polypeptide reads, in one-letter code: Coiled-coil domain-containing protein 18 (1454 aa).

At S45 the chain carries Phosphoserine. Coiled-coil stretches lie at residues 107–138, 170–402, 438–464, and 508–1309; these read APVDQEIKSLREKLNKLRQQNACLVTQNHSLM, ILEE…ISQL, KLVISELRIKLAIKEAEIQKLHANLTA, and TMNK…SGHE. Residues 828 to 851 are disordered; the sequence is QKQRESSAEKLRKMEEKCESAAHE. S1355 is subject to Phosphoserine.

It is found in the cytoplasm. Its subcellular location is the cytoskeleton. The protein resides in the microtubule organizing center. It localises to the centrosome. The protein localises to the centriolar satellite. The chain is Coiled-coil domain-containing protein 18 (CCDC18) from Homo sapiens (Human).